Here is a 265-residue protein sequence, read N- to C-terminus: MMKFAFKIAYFGDNFHGSQFQPDQRTVEGEVINALRRLGVENPRLRSAGRTDAGVHAYGQVISFYSEDKIFPRMLNAELPEDITAWAWAKVSEDFDPRRAKSRVYTYVMYGSDYDISAMRKAVKELIGVHDFSNFTKKFGEGESCVREIISADIRADREFIIFEIEGNAFTWNMVRCIVTAIMEIGKQHRSIEWFRDLLNPEKHKERVEPAPPYGLILKDVKYDDVEFEIDDYAFKTLQSRIEDRIIYHGTIFKLFSLFRQSGIS.

Catalysis depends on aspartate 52, which acts as the Nucleophile. Tyrosine 105 contributes to the substrate binding site.

The protein belongs to the tRNA pseudouridine synthase TruA family.

It catalyses the reaction uridine(38/39/40) in tRNA = pseudouridine(38/39/40) in tRNA. In terms of biological role, formation of pseudouridine at positions 38, 39 and 40 in the anticodon stem and loop of transfer RNAs. The chain is tRNA pseudouridine synthase A from Archaeoglobus fulgidus (strain ATCC 49558 / DSM 4304 / JCM 9628 / NBRC 100126 / VC-16).